The sequence spans 3032 residues: Biorientation of chromosomes in cell division protein 1-like 1 (3032 aa).

Pro residues predominate over residues Met-1–Gly-31. Disordered regions lie at residues Met-1–Asp-48, Glu-164–Val-195, Asn-214–Asp-397, and Val-409–Arg-465. The span at Ala-32–Ala-46 shows a compositional bias: gly residues. The segment covering Lys-234–Val-243 has biased composition (polar residues). A compositionally biased stretch (basic and acidic residues) spans Ser-244–Thr-261. Position 264 is a phosphoserine (Ser-264). A compositionally biased stretch (basic and acidic residues) spans Thr-310–Cys-391. The segment covering Ser-416–Glu-441 has biased composition (acidic residues). Residue Lys-471 is modified to N6-acetyllysine. Phosphoserine occurs at positions 480 and 482. 7 disordered regions span residues Ser-480–Thr-1153, Met-1165–Asn-1296, Gly-1309–Asp-1366, Ala-1424–Arg-1491, Gly-1675–Thr-1701, Ala-1740–Ser-1858, and Ala-1934–Gly-1978. Basic and acidic residues-rich tracts occupy residues Val-488–Leu-503 and Arg-510–Lys-525. Lys-534 is modified (N6-acetyllysine). 2 stretches are compositionally biased toward basic and acidic residues: residues Leu-547–Val-568 and Ser-578–Arg-653. Ser-632 and Ser-656 each carry phosphoserine. Thr-657 carries the phosphothreonine modification. Composition is skewed to basic and acidic residues over residues Thr-668–Ser-736, Gly-743–Arg-768, and Arg-799–Lys-846. The span at Ala-848–Gln-859 shows a compositional bias: polar residues. 4 stretches are compositionally biased toward basic and acidic residues: residues Lys-860–Thr-872, Lys-934–Glu-960, Ala-978–Arg-1015, and Ser-1022–Arg-1069. Ser-1071 is modified (phosphoserine). Polar residues predominate over residues Met-1086–Gln-1096. Residue Ser-1138 is modified to Phosphoserine. Residues Ser-1272–Val-1286 show a composition bias toward low complexity. The span at Ala-1312–Val-1329 shows a compositional bias: polar residues. Residues Ser-1315 and Ser-1364 each carry the phosphoserine modification. Basic and acidic residues-rich tracts occupy residues His-1428–Ser-1470 and Gly-1479–Arg-1491. Phosphoserine occurs at positions 1676 and 1685. The segment covering His-1958–Val-1970 has biased composition (basic and acidic residues). Ser-1989, Ser-2001, Ser-2092, and Ser-2166 each carry phosphoserine. Residues Pro-2082–Glu-2101 form a disordered region. The span at Ser-2088–Ser-2097 shows a compositional bias: polar residues. Disordered regions lie at residues Glu-2303 to Lys-2322, Glu-2370 to Thr-2469, Glu-2536 to Gly-2559, and Asp-2575 to Gly-2596. Ser-2417 and Ser-2443 each carry phosphoserine. Positions Cys-2449–Glu-2459 are enriched in basic and acidic residues. Ser-2554 carries the phosphoserine modification. Ser-2681 is modified (phosphoserine). Residues Thr-2682–Arg-3032 are disordered. Acidic residues-rich tracts occupy residues Ala-2692–Glu-2701 and Ser-2715–Asp-2725. A compositionally biased stretch (basic and acidic residues) spans Leu-2727–Asn-2750. Positions Ser-2758–Gly-2769 are enriched in polar residues. Residues Thr-2782–Ile-2804 are compositionally biased toward basic and acidic residues. Positions Ile-2805 to Lys-2815 are enriched in basic residues. The segment at residues Lys-2807 to Glu-2819 is a DNA-binding region (a.T hook). Basic and acidic residues predominate over residues Phe-2822 to Thr-2832. The segment covering Asp-2833–Ser-2843 has biased composition (polar residues). 2 positions are modified to phosphoserine: Ser-2840 and Ser-2841. A compositionally biased stretch (basic and acidic residues) spans Glu-2853–Ser-2867. Ser-2888 is subject to Phosphoserine. A Phosphothreonine modification is found at Thr-2890. Phosphoserine occurs at positions 2892, 2898, and 2907. Residues Lys-2915 and Lys-2916 each participate in a glycyl lysine isopeptide (Lys-Gly) (interchain with G-Cter in ubiquitin) cross-link. The segment covering Glu-2919–Pro-2932 has biased composition (acidic residues). Ser-2920 carries the post-translational modification Phosphoserine. The span at Leu-2975–Ser-2987 shows a compositional bias: basic and acidic residues. At Ser-3000 the chain carries Phosphoserine. Over residues Gln-3020–Arg-3032 the composition is skewed to basic and acidic residues.

The protein belongs to the BOD1 family. Interacts (via COMPASS-Shg1 domain) with SETD1A at stalled replication forks; this interaction mediates FANCD2-dependent nucleosome remodeling at reversed forks protecting them from nucleolytic degradation.

The protein resides in the chromosome. Component of the fork protection machinery required to protect stalled/damaged replication forks from uncontrolled DNA2-dependent resection. Acts by stabilizing RAD51 at stalled replication forks and protecting RAD51 nucleofilaments from the antirecombinogenic activities of FBH1 and BLM. Does not regulate spindle orientation. This is Biorientation of chromosomes in cell division protein 1-like 1 from Mus musculus (Mouse).